The following is a 326-amino-acid chain: Thioredoxin reductase (326 aa).

40 to 47 (TGNNKGGQ) contributes to the FAD binding site. The cysteines at positions 141 and 144 are disulfide-linked. 291–300 (DVIDHVYKQA) provides a ligand contact to FAD.

Belongs to the class-II pyridine nucleotide-disulfide oxidoreductase family. As to quaternary structure, homodimer. FAD serves as cofactor.

It is found in the cytoplasm. The enzyme catalyses [thioredoxin]-dithiol + NADP(+) = [thioredoxin]-disulfide + NADPH + H(+). The polypeptide is Thioredoxin reductase (trxB) (Buchnera aphidicola subsp. Baizongia pistaciae (strain Bp)).